Consider the following 231-residue polypeptide: Beta-casein (231 aa).

The signal sequence occupies residues 1–15 (MKVFILACLVALALA). At Ser24 the chain carries Phosphoserine. Thr27 carries the post-translational modification Phosphothreonine. Phosphoserine occurs at positions 29, 31, and 32.

The protein belongs to the beta-casein family. Mammary gland specific. Secreted in milk.

It is found in the secreted. Important role in determination of the surface properties of the casein micelles. The sequence is that of Beta-casein (Csn2) from Rattus norvegicus (Rat).